A 90-amino-acid polypeptide reads, in one-letter code: Large ribosomal subunit protein uL23c (90 aa).

This sequence belongs to the universal ribosomal protein uL23 family. In terms of assembly, part of the 50S ribosomal subunit.

The protein localises to the plastid. The protein resides in the chloroplast. In terms of biological role, binds to 23S rRNA. This chain is Large ribosomal subunit protein uL23c (rpl23), found in Oltmannsiellopsis viridis (Marine flagellate).